A 1193-amino-acid polypeptide reads, in one-letter code: DNA-directed RNA polymerase subunit beta (1193 aa).

Residues 1152–1161 are compositionally biased toward acidic residues; it reads IEMRDLEDDE. Residues 1152 to 1193 are disordered; the sequence is IEMRDLEDDEETKKADGLALSNDEDAADLAPVDLERDAVTKE. Over residues 1184–1193 the composition is skewed to basic and acidic residues; the sequence is DLERDAVTKE.

It belongs to the RNA polymerase beta chain family. In terms of assembly, the RNAP catalytic core consists of 2 alpha, 1 beta, 1 beta' and 1 omega subunit. When a sigma factor is associated with the core the holoenzyme is formed, which can initiate transcription.

The enzyme catalyses RNA(n) + a ribonucleoside 5'-triphosphate = RNA(n+1) + diphosphate. DNA-dependent RNA polymerase catalyzes the transcription of DNA into RNA using the four ribonucleoside triphosphates as substrates. The chain is DNA-directed RNA polymerase subunit beta from Bacillus pumilus (strain SAFR-032).